The sequence spans 236 residues: Adenosine 5'-phosphosulfate reductase (236 aa).

Cys-122, Cys-123, Cys-205, and Cys-208 together coordinate [4Fe-4S] cluster. Catalysis depends on Cys-231, which acts as the Nucleophile; cysteine thiosulfonate intermediate.

The protein belongs to the PAPS reductase family. CysH subfamily. Requires [4Fe-4S] cluster as cofactor.

The protein localises to the cytoplasm. It catalyses the reaction [thioredoxin]-disulfide + sulfite + AMP + 2 H(+) = adenosine 5'-phosphosulfate + [thioredoxin]-dithiol. Its pathway is sulfur metabolism; hydrogen sulfide biosynthesis; sulfite from sulfate. Its function is as follows. Catalyzes the formation of sulfite from adenosine 5'-phosphosulfate (APS) using thioredoxin as an electron donor. The protein is Adenosine 5'-phosphosulfate reductase of Mycolicibacterium smegmatis (strain ATCC 700084 / mc(2)155) (Mycobacterium smegmatis).